Reading from the N-terminus, the 482-residue chain is GTPase Der (482 aa).

2 EngA-type G domains span residues 3 to 166 (PVVA…SEQF) and 195 to 368 (IKLA…NSAT). Residues 9–16 (GRPNVGKS), 56–60 (DTGGI), 118–121 (NKVD), 201–208 (GKPNVGKS), 248–252 (DTAGV), and 313–316 (NKWD) each bind GTP. One can recognise a KH-like domain in the interval 369–453 (KRINTSMLTR…PIKVEFREGA (85 aa)).

It belongs to the TRAFAC class TrmE-Era-EngA-EngB-Septin-like GTPase superfamily. EngA (Der) GTPase family. In terms of assembly, associates with the 50S ribosomal subunit.

GTPase that plays an essential role in the late steps of ribosome biogenesis. This Pseudoalteromonas atlantica (strain T6c / ATCC BAA-1087) protein is GTPase Der.